The sequence spans 335 residues: Dihydroorotate dehydrogenase (quinone) (335 aa).

FMN is bound by residues Ala59–Lys63 and Thr83. Lys63 contributes to the substrate binding site. Residue Asn108–Phe112 coordinates substrate. Positions 136 and 169 each coordinate FMN. Asn169 is a binding site for substrate. Ser172 acts as the Nucleophile in catalysis. Asn174 provides a ligand contact to substrate. Residues Lys214 and Thr242 each coordinate FMN. Position 243-244 (Asn243–Thr244) interacts with substrate. FMN is bound by residues Gly265, Gly294, and Tyr315 to Ser316.

Belongs to the dihydroorotate dehydrogenase family. Type 2 subfamily. As to quaternary structure, monomer. The cofactor is FMN.

It localises to the cell membrane. It carries out the reaction (S)-dihydroorotate + a quinone = orotate + a quinol. It participates in pyrimidine metabolism; UMP biosynthesis via de novo pathway; orotate from (S)-dihydroorotate (quinone route): step 1/1. In terms of biological role, catalyzes the conversion of dihydroorotate to orotate with quinone as electron acceptor. The sequence is that of Dihydroorotate dehydrogenase (quinone) from Neisseria meningitidis serogroup A / serotype 4A (strain DSM 15465 / Z2491).